Here is a 240-residue protein sequence, read N- to C-terminus: Methylthioribulose-1-phosphate dehydratase (240 aa).

Positions 1–17 are enriched in polar residues; it reads MAQEVENNNNDHLVQSS. Residues 1–20 are disordered; it reads MAQEVENNNNDHLVQSSDPE. Position 100 (cysteine 100) interacts with substrate. Positions 117 and 119 each coordinate Zn(2+). Residue glutamate 146 is the Proton donor/acceptor of the active site. Residue histidine 202 coordinates Zn(2+).

This sequence belongs to the aldolase class II family. MtnB subfamily. Requires Zn(2+) as cofactor.

It is found in the cytoplasm. The catalysed reaction is 5-(methylsulfanyl)-D-ribulose 1-phosphate = 5-methylsulfanyl-2,3-dioxopentyl phosphate + H2O. Its pathway is amino-acid biosynthesis; L-methionine biosynthesis via salvage pathway; L-methionine from S-methyl-5-thio-alpha-D-ribose 1-phosphate: step 2/6. Its function is as follows. Catalyzes the dehydration of methylthioribulose-1-phosphate (MTRu-1-P) into 2,3-diketo-5-methylthiopentyl-1-phosphate (DK-MTP-1-P). This is Methylthioribulose-1-phosphate dehydratase from Neosartorya fischeri (strain ATCC 1020 / DSM 3700 / CBS 544.65 / FGSC A1164 / JCM 1740 / NRRL 181 / WB 181) (Aspergillus fischerianus).